Reading from the N-terminus, the 177-residue chain is KxDL motif-containing protein 1 (177 aa).

Met1 carries the post-translational modification N-acetylmethionine. A disordered region spans residues 100–177 (SHIPEGSFLE…TDDEEETHEE (78 aa)). Residues 125-145 (ATSEQSTGSCDTSPDTVSPSL) are compositionally biased toward polar residues.

This sequence belongs to the KXD1 family. In terms of assembly, component of the BLOC-one-related complex (BORC) which is composed of BLOC1S1, BLOC1S2, BORCS5, BORCS6, BORCS7, BORCS8, KXD1 and SNAPIN. Associates with the BLOC-1 complex. Interacts with BLOC1S1. Interacts with DTNBP1/BLOC1S7 (via coiled-coil domain). As to expression, widely expressed.

The protein resides in the lysosome membrane. As part of the BORC complex may play a role in lysosomes movement and localization at the cell periphery. Associated with the cytosolic face of lysosomes, the BORC complex may recruit ARL8B and couple lysosomes to microtubule plus-end-directed kinesin motor. May also be involved in the biogenesis of lysosome-related organelles such as melanosomes. In Mus musculus (Mouse), this protein is KxDL motif-containing protein 1 (Kxd1).